Reading from the N-terminus, the 120-residue chain is NAD(P)H-quinone oxidoreductase subunit 3, chloroplastic (120 aa).

The next 3 membrane-spanning stretches (helical) occupy residues 9–29 (IFWA…TISG), 64–84 (MFAL…PWAM), and 88–108 (VLGI…IVGS).

The protein belongs to the complex I subunit 3 family. In terms of assembly, NDH is composed of at least 16 different subunits, 5 of which are encoded in the nucleus.

Its subcellular location is the plastid. It localises to the chloroplast thylakoid membrane. It carries out the reaction a plastoquinone + NADH + (n+1) H(+)(in) = a plastoquinol + NAD(+) + n H(+)(out). The enzyme catalyses a plastoquinone + NADPH + (n+1) H(+)(in) = a plastoquinol + NADP(+) + n H(+)(out). Functionally, NDH shuttles electrons from NAD(P)H:plastoquinone, via FMN and iron-sulfur (Fe-S) centers, to quinones in the photosynthetic chain and possibly in a chloroplast respiratory chain. The immediate electron acceptor for the enzyme in this species is believed to be plastoquinone. Couples the redox reaction to proton translocation, and thus conserves the redox energy in a proton gradient. The chain is NAD(P)H-quinone oxidoreductase subunit 3, chloroplastic from Lotus japonicus (Lotus corniculatus var. japonicus).